The primary structure comprises 92 residues: Small ribosomal subunit protein uS19 (92 aa).

This sequence belongs to the universal ribosomal protein uS19 family.

In terms of biological role, protein S19 forms a complex with S13 that binds strongly to the 16S ribosomal RNA. The protein is Small ribosomal subunit protein uS19 of Proteus mirabilis (strain HI4320).